Consider the following 102-residue polypeptide: Small ribosomal subunit protein eS24 (102 aa).

It belongs to the eukaryotic ribosomal protein eS24 family.

This Methanococcus maripaludis (strain C7 / ATCC BAA-1331) protein is Small ribosomal subunit protein eS24.